The sequence spans 488 residues: UDP-N-acetylmuramate--L-alanine ligase (488 aa).

122-128 (GTHGKTT) lines the ATP pocket.

The protein belongs to the MurCDEF family.

The protein localises to the cytoplasm. The catalysed reaction is UDP-N-acetyl-alpha-D-muramate + L-alanine + ATP = UDP-N-acetyl-alpha-D-muramoyl-L-alanine + ADP + phosphate + H(+). The protein operates within cell wall biogenesis; peptidoglycan biosynthesis. In terms of biological role, cell wall formation. In Mycobacterium marinum (strain ATCC BAA-535 / M), this protein is UDP-N-acetylmuramate--L-alanine ligase.